The primary structure comprises 565 residues: METTTKKARSLYIPYAGPVLLEFPLLNKGSAFSVEERRNFNLSGLLPEVVESIEEQAERAWLQYQGFKTEIDKHIYLRNIQDTNETLFYRLVQNHLEEMMPVIYTPTVGAACERFSEIYRRARGVFISYPNRHNMDDILQNVPNHNIKVIVVTDGERILGLGDQGIGGMGIPIGKLSLYTACGGISPAYTLPVVLDVGTNNQQLLNDPLYMGWRHPRITDNEYYAFVDEFIQAVKQRWPDILLQFEDFAQKNAMPLLTRYRDEICSFNDDIQGTAAVTVGTLIAASRAAGSQLSEQKIVFLGAGSAGCGIAEQIIAQTQREGLSEDAARQNVFMVDRFGLLTDRMPNLLPFQAKLVQKCDNLQHWDTENDVLSLLDVVRNVKPDILIGVSGQTGLFTEEIIREMHKHCPRPIVMPLSNPTSRVEATPQDIIAWTEGNALVATGSPFSPVIWKDKVYPIAQCNNAYIFPGIGLGVIASGASRITDEMLMSASETLAKHSPLVNNGEGLVLPALKDIQVVSRAIAFAVGKMAQQQGVAVKTSAEALQQAIDDNFWKPEYRDYRRTSI.

Tyr104 (proton donor) is an active-site residue. Arg157 lines the NAD(+) pocket. The active-site Proton acceptor is Lys175. Positions 246, 247, and 270 each coordinate a divalent metal cation. Residues Asp270 and Asn418 each contribute to the NAD(+) site.

It belongs to the malic enzymes family. In terms of assembly, homotetramer. It depends on Mg(2+) as a cofactor. The cofactor is Mn(2+).

The catalysed reaction is (S)-malate + NAD(+) = pyruvate + CO2 + NADH. It catalyses the reaction oxaloacetate + H(+) = pyruvate + CO2. In Salmonella agona (strain SL483), this protein is NAD-dependent malic enzyme.